Consider the following 443-residue polypeptide: Cysteine proteinase B (443 aa).

Residues 1–27 form the signal peptide; the sequence is MATSRAALCAVAVVCVVLAAACAPARA. A propeptide spans 28–125 (activation peptide); it reads IHVGTPAAAL…YRKARADLSA (98 aa). Disulfide bonds link C147-C188 and C181-C226. C150 is an active-site residue. N-linked (GlcNAc...) asparagine glycosylation occurs at N228. A disulfide bridge links C281 with C329. Active-site residues include H288 and N308.

It belongs to the peptidase C1 family.

The sequence is that of Cysteine proteinase B (LMCPB) from Leishmania mexicana.